The sequence spans 405 residues: Probable tRNA sulfurtransferase (405 aa).

Residues 60 to 165 (EPVNDRLKVV…QDGAYISNQL (106 aa)) form the THUMP domain. ATP contacts are provided by residues 183–184 (ML), 208–209 (HF), Arg-265, Gly-287, and Gln-296.

This sequence belongs to the ThiI family.

The protein localises to the cytoplasm. It carries out the reaction [ThiI sulfur-carrier protein]-S-sulfanyl-L-cysteine + a uridine in tRNA + 2 reduced [2Fe-2S]-[ferredoxin] + ATP + H(+) = [ThiI sulfur-carrier protein]-L-cysteine + a 4-thiouridine in tRNA + 2 oxidized [2Fe-2S]-[ferredoxin] + AMP + diphosphate. It catalyses the reaction [ThiS sulfur-carrier protein]-C-terminal Gly-Gly-AMP + S-sulfanyl-L-cysteinyl-[cysteine desulfurase] + AH2 = [ThiS sulfur-carrier protein]-C-terminal-Gly-aminoethanethioate + L-cysteinyl-[cysteine desulfurase] + A + AMP + 2 H(+). Its pathway is cofactor biosynthesis; thiamine diphosphate biosynthesis. Functionally, catalyzes the ATP-dependent transfer of a sulfur to tRNA to produce 4-thiouridine in position 8 of tRNAs, which functions as a near-UV photosensor. Also catalyzes the transfer of sulfur to the sulfur carrier protein ThiS, forming ThiS-thiocarboxylate. This is a step in the synthesis of thiazole, in the thiamine biosynthesis pathway. The sulfur is donated as persulfide by IscS. This chain is Probable tRNA sulfurtransferase, found in Lactobacillus delbrueckii subsp. bulgaricus (strain ATCC BAA-365 / Lb-18).